A 724-amino-acid chain; its full sequence is Peroxidase mlt-7 (724 aa).

An N-terminal signal peptide occupies residues 1-24 (MRRLHRNLSLLFLICILNEYRIES). Asn-7 is a glycosylation site (N-linked (GlcNAc...) asparagine). A propeptide spanning residues 25–178 (QTLSPPITDR…GCVPQLSDVG (154 aa)) is cleaved from the precursor. One can recognise a ShKT domain in the interval 42–76 (CCDHHEWCRFWASIGECNANKDWMTENCQLACGTC). A disulfide bridge connects residues Cys-181 and Cys-198. A glycan (N-linked (GlcNAc...) asparagine) is linked at Asn-233. His-271 serves as the catalytic Proton acceptor. Asp-272 provides a ligand contact to Ca(2+). Cysteines 284 and 294 form a disulfide. 4 residues coordinate Ca(2+): Thr-335, Tyr-337, Asp-339, and Ser-341. His-493 provides a ligand contact to heme b. Asn-509 and Asn-617 each carry an N-linked (GlcNAc...) asparagine glycan. Disulfide bonds link Cys-588/Cys-645 and Cys-686/Cys-710.

It belongs to the peroxidase family. It depends on heme b as a cofactor. Expressed in the hypodermal cells, specifically the head and seam/body.

The enzyme catalyses 2 a phenolic donor + H2O2 = 2 a phenolic radical donor + 2 H2O. Its function is as follows. Plays an essential role in cuticle biogenesis. Required in combination with bli-3 for correct formation of cross-links in cuticle collagens. The sequence is that of Peroxidase mlt-7 from Caenorhabditis elegans.